Consider the following 202-residue polypeptide: NADH-quinone oxidoreductase subunit C (202 aa).

Belongs to the complex I 30 kDa subunit family. NDH-1 is composed of 14 different subunits. Subunits NuoB, C, D, E, F, and G constitute the peripheral sector of the complex.

It is found in the cell inner membrane. It carries out the reaction a quinone + NADH + 5 H(+)(in) = a quinol + NAD(+) + 4 H(+)(out). Functionally, NDH-1 shuttles electrons from NADH, via FMN and iron-sulfur (Fe-S) centers, to quinones in the respiratory chain. The immediate electron acceptor for the enzyme in this species is believed to be ubiquinone. Couples the redox reaction to proton translocation (for every two electrons transferred, four hydrogen ions are translocated across the cytoplasmic membrane), and thus conserves the redox energy in a proton gradient. This is NADH-quinone oxidoreductase subunit C from Albidiferax ferrireducens (strain ATCC BAA-621 / DSM 15236 / T118) (Rhodoferax ferrireducens).